A 102-amino-acid polypeptide reads, in one-letter code: NADH-quinone oxidoreductase subunit K (102 aa).

The next 3 helical transmembrane spans lie at 6-26, 30-50, and 65-85; these read MEHGLLLAAILFCIGLCGLLI, LLFILMSIEIMMNASALAFVV, and ILVISLAAAEASIGLALLLLL.

Belongs to the complex I subunit 4L family. As to quaternary structure, NDH-1 is composed of 14 different subunits. Subunits NuoA, H, J, K, L, M, N constitute the membrane sector of the complex.

Its subcellular location is the cell inner membrane. The catalysed reaction is a quinone + NADH + 5 H(+)(in) = a quinol + NAD(+) + 4 H(+)(out). Functionally, NDH-1 shuttles electrons from NADH, via FMN and iron-sulfur (Fe-S) centers, to quinones in the respiratory chain. The immediate electron acceptor for the enzyme in this species is believed to be ubiquinone. Couples the redox reaction to proton translocation (for every two electrons transferred, four hydrogen ions are translocated across the cytoplasmic membrane), and thus conserves the redox energy in a proton gradient. In Aeromonas salmonicida (strain A449), this protein is NADH-quinone oxidoreductase subunit K.